The following is a 236-amino-acid chain: MNTASLVRSLSRVALRSSQVVRMAAPRHFSQSAKVLSVTPELQQALNREIEAEQQLSSDNLQGAVAPTFAGFQVTNKDAEVRLTKKNGSEDILVVFNVNHSVDMDEGFDDEPSQAVAPVPVAMPPFTVEITKGDQRLCFHLELVPVDDQPDEYDFRVEEFYVAPSAKNGNEDVPSEVYASSGKYIDPDLHDLLFVRYLEERGLDARFCKTLVAYATHYEHSQYVGLLDKIKKFISK.

The N-terminal 36 residues, Met1 to Leu36, are a transit peptide targeting the mitochondrion.

This sequence belongs to the MAM33 family.

It localises to the mitochondrion matrix. This chain is Conserved regulator of innate immunity protein 3 (cri-3), found in Caenorhabditis elegans.